Reading from the N-terminus, the 113-residue chain is U11-theraphotoxin-Hhn1a (113 aa).

Residues 1–21 (MNTVRVTFLLVFVLAVSLGQA) form the signal peptide. Residues 22-74 (DKDENRMEMQEKTEQGKSYLDFAENLLLQKLEELEAKLPEEDSEESRNSRQKR) constitute a propeptide that is removed on maturation. The segment covering 58–69 (KLPEEDSEESRN) has biased composition (basic and acidic residues). The interval 58–82 (KLPEEDSEESRNSRQKRCIGEGVPC) is disordered. Intrachain disulfides connect cysteine 75-cysteine 90, cysteine 82-cysteine 95, and cysteine 89-cysteine 110.

The protein belongs to the neurotoxin 14 (magi-1) family. 01 (HNTX-16) subfamily. Expressed by the venom gland.

It localises to the secreted. Functionally, probable ion channel inhibitor. This chain is U11-theraphotoxin-Hhn1a, found in Cyriopagopus hainanus (Chinese bird spider).